Reading from the N-terminus, the 198-residue chain is Recombination protein RecR (198 aa).

Residues 57 to 72 form a C4-type zinc finger; sequence CQRCNTFSEAELCAIC. The 96-residue stretch at 80–175 folds into the Toprim domain; it reads DQLCIVEMPA…TVTRIARGMP (96 aa).

This sequence belongs to the RecR family.

May play a role in DNA repair. It seems to be involved in an RecBC-independent recombinational process of DNA repair. It may act with RecF and RecO. In Chromobacterium violaceum (strain ATCC 12472 / DSM 30191 / JCM 1249 / CCUG 213 / NBRC 12614 / NCIMB 9131 / NCTC 9757 / MK), this protein is Recombination protein RecR.